The primary structure comprises 1362 residues: DNA-directed RNA polymerase subunit beta (1362 aa).

This sequence belongs to the RNA polymerase beta chain family. In terms of assembly, the RNAP catalytic core consists of 2 alpha, 1 beta, 1 beta' and 1 omega subunit. When a sigma factor is associated with the core the holoenzyme is formed, which can initiate transcription.

The catalysed reaction is RNA(n) + a ribonucleoside 5'-triphosphate = RNA(n+1) + diphosphate. Functionally, DNA-dependent RNA polymerase catalyzes the transcription of DNA into RNA using the four ribonucleoside triphosphates as substrates. This Acinetobacter baylyi (strain ATCC 33305 / BD413 / ADP1) protein is DNA-directed RNA polymerase subunit beta.